The chain runs to 66 residues: Large ribosomal subunit protein bL35 (66 aa).

The protein belongs to the bacterial ribosomal protein bL35 family.

The polypeptide is Large ribosomal subunit protein bL35 (Brucella melitensis biotype 1 (strain ATCC 23456 / CCUG 17765 / NCTC 10094 / 16M)).